The primary structure comprises 441 residues: Actin-related protein 4 (441 aa).

Residues Val48–Arg73 are disordered. Residues Glu60–Lys70 are compositionally biased toward basic and acidic residues.

The protein belongs to the actin family. ARP4 subfamily. In terms of assembly, component of the SWR1 chromatin-remodeling complex and of the NuA4 histone acetyltransferase complex. Interacts with the SWI/SNF complex. Interacts with EAF1A and EAF1B. In terms of tissue distribution, mostly expressed in flowers, and, to a lower extent, in roots, seedlings, leaves and siliques (at protein level).

The protein localises to the nucleus. The protein resides in the cytoplasm. Its function is as follows. Involved in several developmental processes including organization of plant organs, flowering time, anther development, flower senescence and fertility, probably by regulating the chromatin structure. This is Actin-related protein 4 from Arabidopsis thaliana (Mouse-ear cress).